The chain runs to 120 residues: uncharacterized protein (120 aa).

This is an uncharacterized protein from Saccharomyces cerevisiae (strain ATCC 204508 / S288c) (Baker's yeast).